A 161-amino-acid chain; its full sequence is 2-C-methyl-D-erythritol 2,4-cyclodiphosphate synthase (161 aa).

A divalent metal cation-binding residues include aspartate 8 and histidine 10. Residues 8-10 and 34-35 each bind 4-CDP-2-C-methyl-D-erythritol 2-phosphate; these read DLH and HS. Histidine 42 is an a divalent metal cation binding site. Residues 56 to 58, 100 to 106, and arginine 142 contribute to the 4-CDP-2-C-methyl-D-erythritol 2-phosphate site; these read DIG and AEYPKML.

Belongs to the IspF family. In terms of assembly, homotrimer. Requires a divalent metal cation as cofactor.

It carries out the reaction 4-CDP-2-C-methyl-D-erythritol 2-phosphate = 2-C-methyl-D-erythritol 2,4-cyclic diphosphate + CMP. The protein operates within isoprenoid biosynthesis; isopentenyl diphosphate biosynthesis via DXP pathway; isopentenyl diphosphate from 1-deoxy-D-xylulose 5-phosphate: step 4/6. In terms of biological role, involved in the biosynthesis of isopentenyl diphosphate (IPP) and dimethylallyl diphosphate (DMAPP), two major building blocks of isoprenoid compounds. Catalyzes the conversion of 4-diphosphocytidyl-2-C-methyl-D-erythritol 2-phosphate (CDP-ME2P) to 2-C-methyl-D-erythritol 2,4-cyclodiphosphate (ME-CPP) with a corresponding release of cytidine 5-monophosphate (CMP). In Buchnera aphidicola subsp. Acyrthosiphon pisum (strain 5A), this protein is 2-C-methyl-D-erythritol 2,4-cyclodiphosphate synthase.